A 639-amino-acid polypeptide reads, in one-letter code: Extracellular metalloproteinase 9 (639 aa).

An N-terminal signal peptide occupies residues 1 to 19 (MHGLLLAAGLLSLPLRALG). A propeptide spanning residues 20–250 (HPNPNPQMHT…IHGVVDYVAD (231 aa)) is cleaved from the precursor. N-linked (GlcNAc...) asparagine glycosylation occurs at N278. Residues 293–312 (PTTRGNNGIAQDNPSGGNQY) form a disordered region. H434 contributes to the Zn(2+) binding site. E435 is an active-site residue. H438 is a Zn(2+) binding site.

Belongs to the peptidase M36 family. Zn(2+) serves as cofactor.

The protein localises to the secreted. Its function is as follows. Secreted metalloproteinase that allows assimilation of proteinaceous substrates and probably acts as a virulence factor. In Coccidioides posadasii (strain C735) (Valley fever fungus), this protein is Extracellular metalloproteinase 9 (MEP9).